The primary structure comprises 177 residues: Large ribosomal subunit protein uL6 (177 aa).

Belongs to the universal ribosomal protein uL6 family. In terms of assembly, part of the 50S ribosomal subunit.

In terms of biological role, this protein binds to the 23S rRNA, and is important in its secondary structure. It is located near the subunit interface in the base of the L7/L12 stalk, and near the tRNA binding site of the peptidyltransferase center. This is Large ribosomal subunit protein uL6 from Brucella anthropi (strain ATCC 49188 / DSM 6882 / CCUG 24695 / JCM 21032 / LMG 3331 / NBRC 15819 / NCTC 12168 / Alc 37) (Ochrobactrum anthropi).